Consider the following 153-residue polypeptide: Ribonuclease VapC6 (153 aa).

In terms of domain architecture, PINc spans 6 to 152 (VFIDSSVMVG…EKVDFIEIIK (147 aa)). Asp-9 and Asp-120 together coordinate Mg(2+).

It belongs to the PINc/VapC protein family. Requires Mg(2+) as cofactor.

In terms of biological role, toxic component of a type II toxin-antitoxin (TA) system. An RNase. The chain is Ribonuclease VapC6 from Methanocaldococcus jannaschii (strain ATCC 43067 / DSM 2661 / JAL-1 / JCM 10045 / NBRC 100440) (Methanococcus jannaschii).